The chain runs to 100 residues: Urease subunit gamma (100 aa).

The protein belongs to the urease gamma subunit family. In terms of assembly, heterotrimer of UreA (gamma), UreB (beta) and UreC (alpha) subunits. Three heterotrimers associate to form the active enzyme.

Its subcellular location is the cytoplasm. The enzyme catalyses urea + 2 H2O + H(+) = hydrogencarbonate + 2 NH4(+). It functions in the pathway nitrogen metabolism; urea degradation; CO(2) and NH(3) from urea (urease route): step 1/1. This is Urease subunit gamma from Escherichia coli O157:H7 (strain EC4115 / EHEC).